The primary structure comprises 311 residues: MTEIDFDIAIIGAGPAGMTAAVYASRANLKTVMIERGIPGGQMANTEEVENFPGFEMITGPDLSTKMFEHAKKFGAVYQYGDIKSVEDKGEYKVINFGNKELTAKAVIIATGAEYKKIGVPGEQELGGRGVSYCAVCDGAFFKNKRLFVIGGGDSAVEEGTFLTKFADKVTIVHRRDELRAQRILQDRAFKNDKIDFIWSHTLKSINEKDGKVGSVTLTSTKDGSEETHEADGVFIYIGMKPLTAPFKDLGITNDVGYIVTKDDMTTSAPGIFAAGDVRDKGLRQIVTATGDGSIAAQSAAEYIEHLNDQA.

Residue 35–42 (ERGIPGGQ) participates in FAD binding. Cysteine 134 and cysteine 137 are joined by a disulfide. 277–286 (DVRDKGLRQI) provides a ligand contact to FAD.

This sequence belongs to the class-II pyridine nucleotide-disulfide oxidoreductase family. In terms of assembly, homodimer. The cofactor is FAD.

The protein resides in the cytoplasm. It catalyses the reaction [thioredoxin]-dithiol + NADP(+) = [thioredoxin]-disulfide + NADPH + H(+). The chain is Thioredoxin reductase (trxB) from Staphylococcus aureus (strain MRSA252).